The chain runs to 291 residues: Acetyl-coenzyme A carboxylase carboxyl transferase subunit beta (291 aa).

Residues 34 to 291 (MWTKCSNCNN…LILHGVNKYE (258 aa)) enclose the CoA carboxyltransferase N-terminal domain. 4 residues coordinate Zn(2+): C38, C41, C57, and C60. The C4-type zinc-finger motif lies at 38-60 (CSNCNNMIYYEDLENNKYVCTKC).

It belongs to the AccD/PCCB family. Acetyl-CoA carboxylase is a heterohexamer composed of biotin carboxyl carrier protein (AccB), biotin carboxylase (AccC) and two subunits each of ACCase subunit alpha (AccA) and ACCase subunit beta (AccD). Zn(2+) serves as cofactor.

The protein localises to the cytoplasm. The catalysed reaction is N(6)-carboxybiotinyl-L-lysyl-[protein] + acetyl-CoA = N(6)-biotinyl-L-lysyl-[protein] + malonyl-CoA. The protein operates within lipid metabolism; malonyl-CoA biosynthesis; malonyl-CoA from acetyl-CoA: step 1/1. Component of the acetyl coenzyme A carboxylase (ACC) complex. Biotin carboxylase (BC) catalyzes the carboxylation of biotin on its carrier protein (BCCP) and then the CO(2) group is transferred by the transcarboxylase to acetyl-CoA to form malonyl-CoA. The chain is Acetyl-coenzyme A carboxylase carboxyl transferase subunit beta from Clostridium botulinum (strain Eklund 17B / Type B).